A 277-amino-acid polypeptide reads, in one-letter code: Probable ketoamine kinase HMPREF0351_12196 (277 aa).

Glu84 to Ile86 is an ATP binding site. Asp186 serves as the catalytic Proton acceptor.

Belongs to the fructosamine kinase family.

The enzyme catalyses N(6)-(D-ribulosyl)-L-lysine + ATP = N(6)-(3-O-phospho-D-ribulosyl)-L-lysine + ADP + H(+). The catalysed reaction is N-(D-ribulosyl)-cadaverine + ATP = N-(3-O-phospho-D-ribulosyl)-cadaverine + ADP + H(+). It carries out the reaction N(6)-(D-erythrulosyl)-L-lysine + ATP = N(6)-(3-O-phospho-D-erythrulosyl)-L-lysine + ADP + H(+). It catalyses the reaction N-(D-erythrulosyl)-cadaverine + ATP = N-(3-O-phospho-D-erythrulosyl)-cadaverine + ADP + H(+). The enzyme catalyses N(6)-D-ribulosyl-L-lysyl-[protein] + ATP = N(6)-(3-O-phospho-D-ribulosyl)-L-lysyl-[protein] + ADP + H(+). The catalysed reaction is N(6)-(D-erythrulosyl)-L-lysyl-[protein] + ATP = N(6)-(3-O-phospho-D-erythrulosyl)-L-lysyl-[protein] + ADP + H(+). Functionally, ketoamine kinase that phosphorylates ketoamines, such as erythruloselysine, erythrulosecadaverine, ribuloselysine and ribulosecadaverine, on the third carbon of the sugar moiety to generate ketoamine 3-phosphate. Has higher activity on free lysine (erythruloselysine and ribuloselysine), than on ribuloselysine and erythruloselysine residues on glycated proteins. This is Probable ketoamine kinase HMPREF0351_12196 from Enterococcus faecium (strain ATCC BAA-472 / TX0016 / DO).